The chain runs to 496 residues: Anaerobic nitric oxide reductase flavorubredoxin (496 aa).

The interval 30-210 (TKGTSYNSYL…PFSALVTAKI (181 aa)) is zinc metallo-hydrolase. Fe cation contacts are provided by histidine 79, glutamate 81, aspartate 83, histidine 147, aspartate 166, and histidine 227. In terms of domain architecture, Flavodoxin-like spans 254-393 (ITIFYDSMSN…LCREHGQFIA (140 aa)). FMN is bound by residues 260 to 264 (SMSNN) and 342 to 369 (AFGS…ETAV). In terms of domain architecture, Rubredoxin-like spans 444 to 495 (KQCMLCSVCNWVYDPEIGEPNQGVEPNTPWSSVPNDFLCPECHLGKDVFVEI). Fe cation contacts are provided by cysteine 449, cysteine 452, cysteine 482, and cysteine 485.

The protein in the N-terminal section; belongs to the zinc metallo-hydrolase group 3 family. As to quaternary structure, homotetramer. The cofactor is Fe cation. FMN is required as a cofactor.

The protein localises to the cytoplasm. The protein operates within nitrogen metabolism; nitric oxide reduction. In terms of biological role, anaerobic nitric oxide reductase; uses NADH to detoxify nitric oxide (NO), protecting several 4Fe-4S NO-sensitive enzymes. Has at least 2 reductase partners, only one of which (NorW, flavorubredoxin reductase) has been identified. NO probably binds to the di-iron center; electrons enter from the NorW at rubredoxin and are transferred sequentially to the FMN center and the di-iron center. Also able to function as an aerobic oxygen reductase. This Aliivibrio fischeri (strain ATCC 700601 / ES114) (Vibrio fischeri) protein is Anaerobic nitric oxide reductase flavorubredoxin.